A 174-amino-acid chain; its full sequence is Photosystem II repair protein PSB27-H1, chloroplastic (174 aa).

Residues 1-35 (MASASATATLLKPNLPPHKPTIIASSVSPPLPPPR) are disordered. At Thr94 the chain carries Phosphothreonine. At Tyr132 the chain carries Phosphotyrosine.

It belongs to the Psb27 family.

It is found in the plastid. The protein localises to the chloroplast thylakoid membrane. In terms of biological role, probably involved in repair of photodamaged photosystem II (PSII). In Arabidopsis thaliana (Mouse-ear cress), this protein is Photosystem II repair protein PSB27-H1, chloroplastic (PSB27-1).